The primary structure comprises 279 residues: 3-methyl-2-oxobutanoate hydroxymethyltransferase (279 aa).

Residues aspartate 43 and aspartate 82 each contribute to the Mg(2+) site. Residues 43–44 (DS), aspartate 82, and lysine 112 each bind 3-methyl-2-oxobutanoate. Glutamate 114 contacts Mg(2+). The Proton acceptor role is filled by glutamate 181.

The protein belongs to the PanB family. As to quaternary structure, homodecamer; pentamer of dimers. It depends on Mg(2+) as a cofactor.

It localises to the cytoplasm. The enzyme catalyses 3-methyl-2-oxobutanoate + (6R)-5,10-methylene-5,6,7,8-tetrahydrofolate + H2O = 2-dehydropantoate + (6S)-5,6,7,8-tetrahydrofolate. Its pathway is cofactor biosynthesis; (R)-pantothenate biosynthesis; (R)-pantoate from 3-methyl-2-oxobutanoate: step 1/2. In terms of biological role, catalyzes the reversible reaction in which hydroxymethyl group from 5,10-methylenetetrahydrofolate is transferred onto alpha-ketoisovalerate to form ketopantoate. This Geobacillus sp. (strain WCH70) protein is 3-methyl-2-oxobutanoate hydroxymethyltransferase.